Reading from the N-terminus, the 161-residue chain is Globin CTT-VIIB-5/CTT-VIIB-9 (161 aa).

Positions Met-1–Ala-16 are cleaved as a signal peptide. Positions Pro-18–Leu-161 constitute a Globin domain. Heme b contacts are provided by His-76 and His-111.

Belongs to the globin family. As to quaternary structure, homodimer.

This chain is Globin CTT-VIIB-5/CTT-VIIB-9 (CTT-7B5), found in Chironomus thummi thummi (Midge).